The primary structure comprises 151 residues: Large ribosomal subunit protein bL9 (151 aa).

The protein belongs to the bacterial ribosomal protein bL9 family.

Its function is as follows. Binds to the 23S rRNA. This is Large ribosomal subunit protein bL9 from Chloroherpeton thalassium (strain ATCC 35110 / GB-78).